Reading from the N-terminus, the 98-residue chain is Aspartyl/glutamyl-tRNA(Asn/Gln) amidotransferase subunit C (98 aa).

It belongs to the GatC family. Heterotrimer of A, B and C subunits.

The enzyme catalyses L-glutamyl-tRNA(Gln) + L-glutamine + ATP + H2O = L-glutaminyl-tRNA(Gln) + L-glutamate + ADP + phosphate + H(+). It catalyses the reaction L-aspartyl-tRNA(Asn) + L-glutamine + ATP + H2O = L-asparaginyl-tRNA(Asn) + L-glutamate + ADP + phosphate + 2 H(+). In terms of biological role, allows the formation of correctly charged Asn-tRNA(Asn) or Gln-tRNA(Gln) through the transamidation of misacylated Asp-tRNA(Asn) or Glu-tRNA(Gln) in organisms which lack either or both of asparaginyl-tRNA or glutaminyl-tRNA synthetases. The reaction takes place in the presence of glutamine and ATP through an activated phospho-Asp-tRNA(Asn) or phospho-Glu-tRNA(Gln). The chain is Aspartyl/glutamyl-tRNA(Asn/Gln) amidotransferase subunit C from Gloeothece citriformis (strain PCC 7424) (Cyanothece sp. (strain PCC 7424)).